The following is a 524-amino-acid chain: Acetyl-CoA hydrolase (524 aa).

279–283 provides a ligand contact to CoA; sequence GIGNI. Catalysis depends on glutamate 304, which acts as the 5-glutamyl coenzyme A thioester intermediate. Glycine 398 serves as a coordination point for CoA.

This sequence belongs to the acetyl-CoA hydrolase/transferase family.

Its subcellular location is the cytoplasm. It carries out the reaction acetyl-CoA + H2O = acetate + CoA + H(+). Functionally, presumably involved in regulating the intracellular acetyl-CoA pool for fatty acid and cholesterol synthesis and fatty acid oxidation. In Yarrowia lipolytica (strain CLIB 122 / E 150) (Yeast), this protein is Acetyl-CoA hydrolase (ACH1).